The sequence spans 514 residues: Nuclear hormone receptor family member nhr-85 (514 aa).

Positions Thr28 to Ser48 are disordered. The segment at residues Thr110–Phe186 is a DNA-binding region (nuclear receptor). NR C4-type zinc fingers lie at residues Cys113–Cys133 and Cys150–Cys174. The NR LBD domain maps to Gln216–Glu514. Positions Glu465–Glu514 are disordered.

It belongs to the nuclear hormone receptor family.

It localises to the nucleus. Orphan nuclear receptor. This is Nuclear hormone receptor family member nhr-85 (nhr-85) from Caenorhabditis elegans.